Reading from the N-terminus, the 295-residue chain is Glycine N-acyltransferase (295 aa).

3 positions are modified to N6-acetyllysine; alternate: Lys15, Lys126, and Lys140. An N6-succinyllysine; alternate mark is found at Lys15, Lys126, and Lys140. Residue Lys158 is modified to N6-acetyllysine. Lys168 bears the N6-succinyllysine mark. Position 255 is an N6-acetyllysine; alternate (Lys255). Lys255 bears the N6-succinyllysine; alternate mark.

This sequence belongs to the glycine N-acyltransferase family. As to expression, detected in liver (at protein level).

It is found in the mitochondrion. The catalysed reaction is an acyl-CoA + glycine = an N-acylglycine + CoA + H(+). The enzyme catalyses benzoyl-CoA + glycine = N-benzoylglycine + CoA + H(+). Its function is as follows. Mitochondrial acyltransferase which transfers an acyl group to the N-terminus of glycine and glutamine, although much less efficiently. Can conjugate a multitude of substrates to form a variety of N-acylglycines, thereby detoxify xenobiotics, such as benzoic acid or salicylic acid, and endogenous organic acids, such as isovaleric acid. The sequence is that of Glycine N-acyltransferase (GLYAT) from Bos taurus (Bovine).